The chain runs to 496 residues: Germacrene A hydroxylase (496 aa).

Residues 1–2 (ME) are Cytoplasmic-facing. Residues 3-23 (LTLTTSLGLAVFVFILFKLLT) traverse the membrane as a helical; Signal-anchor for type II membrane protein segment. The Lumenal segment spans residues 24-496 (GSKSTKNSLP…TAYKTANNSA (473 aa)). Cys-432 contributes to the heme binding site. The N-linked (GlcNAc...) asparagine glycan is linked to Asn-493.

The protein belongs to the cytochrome P450 family. The cofactor is heme.

The protein localises to the endoplasmic reticulum membrane. It catalyses the reaction (+)-(R)-germacrene A + 3 reduced [NADPH--hemoprotein reductase] + 3 O2 = germacra-1(10),4,11(13)-trien-12-oate + 3 oxidized [NADPH--hemoprotein reductase] + 4 H2O + 4 H(+). It functions in the pathway secondary metabolite biosynthesis; terpenoid biosynthesis. Functionally, involved in the biosynthesis of germacrene-derived sesquiterpene lactones. Catalyzes three consecutive oxidations of germacrene A to produce germacrene A acid. Could also catalyze the three-step oxidation of non-natural substrate amorphadiene to artemisinic acid. The sequence is that of Germacrene A hydroxylase from Barnadesia spinosa (Spiny barnadesia).